We begin with the raw amino-acid sequence, 2561 residues long: Squalestatin hexaketide synthase (2561 aa).

A disordered region spans residues 1–77; it reads MDVSKEEGQR…NGTTNITPEF (77 aa). Positions 20–74 are enriched in low complexity; it reads NETTNGHTNGYTNGHTNGHTNGTTNATTNGTTNGTMNGTTNGTTNRTTNGTTNIT. The Ketosynthase family 3 (KS3) domain occupies 83–503; the sequence is QVPVAICGIG…GSNTHIIIDS (421 aa). Catalysis depends on for beta-ketoacyl synthase activity residues Cys253, His390, and His427. A malonyl-CoA:ACP transacylase (MAT) domain region spans residues 603–925; the sequence is FIFTGQGAQW…LEAIGKLFCF (323 aa). Residues 972 to 1101 form an N-terminal hotdog fold region; sequence HELLGERSLE…GLVTASVVIS (130 aa). A dehydratase (DH) domain region spans residues 972–1253; the sequence is HELLGERSLE…RGFKCKRTDE (282 aa). Positions 972–1257 constitute a PKS/mFAS DH domain; sequence HELLGERSLE…CKRTDESFIQ (286 aa). His1004 serves as the catalytic Proton acceptor; for dehydratase activity. The interval 1112-1257 is C-terminal hotdog fold; sequence TFPRKVDTSR…CKRTDESFIQ (146 aa). The Proton donor; for dehydratase activity role is filled by Asp1174. The interval 1421–1599 is methyltransferase (CMet) domain; sequence SFFQAAGLNK…GFEGAGTVVL (179 aa). Positions 1826–2146 are enoyl reductase (ER) (ER) domain; the sequence is GMLNTLHWVG…RGVHMGRIVV (321 aa). The interval 2170–2343 is ketoreductase (KR) domain; that stretch reads STYLLTGGMG…PASVIDIAAI (174 aa). Positions 2472–2550 constitute a Carrier domain; that stretch reads VLFAQEIAKR…SLGRLATKRL (79 aa). Position 2509 is an O-(pantetheine 4'-phosphoryl)serine (Ser2509).

It functions in the pathway secondary metabolite biosynthesis. Highly reducing polyketide synthase (HR-PKS); part of the gene cluster that mediates the biosynthesis of squalestatin S1 (SQS1, also known as zaragozic acid A), a heavily oxidized fungal polyketide that offers potent cholesterol lowering activity by targeting squalene synthase (SS). SQS1 is composed of a 2,8-dioxobicyclic[3.2.1]octane-3,4,5-tricarboxyclic acid core that is connected to two lipophilic polyketide arms. These initial steps feature the priming of an unusual benzoic acid starter unit onto the highly reducing polyketide synthase pks2, followed by oxaloacetate extension and product release to generate a tricarboxylic acid containing product. The phenylalanine ammonia lyase (PAL) M7 and the acyl-CoA ligase M9 are involved in transforming phenylalanine into benzoyl-CoA. The citrate synthase-like protein R3 is involved in connecting the C-alpha-carbons of the hexaketide chain and oxaloacetate to afford the tricarboxylic acid unit. The potential hydrolytic enzymes, M8 and M10, are in close proximity to pks2 and may participate in product release. On the other side, the tetraketide arm is synthesized by a the squalestatin tetraketide synthase pks1 and enzymatically esterified to the core in the last biosynthetic step, by the acetyltransferase M4. The biosynthesis of the tetraketide must involve 3 rounds of chain extension. After the first and second rounds methyl-transfer occurs, and in all rounds of extension the ketoreductase and dehydratase are active. The enoyl reductase and C-MeT of pks1 are not active in the final round of extension. The acetyltransferase M4 appears to have a broad substrate selectivity for its acyl CoA substrate, allowing the in vitro synthesis of novel squalestatins. The biosynthesis of SQS1 requires several oxidative steps likely performed by oxidoreductases M1, R1 and R2. Finally, in support of the identification of the cluster as being responsible for SQS1 production, the cluster contains a gene encoding a putative squalene synthase (SS) R6, suggesting a likely mechanism for self-resistance. In Phoma sp. (strain ATCC 20986 / MF5453), this protein is Squalestatin hexaketide synthase.